The chain runs to 266 residues: 3',5'-cyclic-nucleotide phosphodiesterase alr5338 (266 aa).

Residues aspartate 14, histidine 16, aspartate 56, asparagine 86, histidine 155, histidine 194, and histidine 196 each coordinate Fe cation. AMP-binding positions include histidine 16, aspartate 56, and 86–87 (NH). Residue histidine 196 participates in AMP binding.

This sequence belongs to the cyclic nucleotide phosphodiesterase class-III family. Fe(2+) serves as cofactor. Requires Mn(2+) as cofactor.

The enzyme catalyses a nucleoside 3',5'-cyclic phosphate + H2O = a nucleoside 5'-phosphate + H(+). It catalyses the reaction 3',5'-cyclic AMP + H2O = AMP + H(+). It carries out the reaction 3',5'-cyclic GMP + H2O = GMP + H(+). Activated by iron and manganese. Hydrolyzes cAMP to 5'-AMP. Plays an important regulatory role in modulating the intracellular concentration of cAMP, thereby influencing cAMP-dependent processes. Can also hydrolyze cGMP. The protein is 3',5'-cyclic-nucleotide phosphodiesterase alr5338 of Nostoc sp. (strain PCC 7120 / SAG 25.82 / UTEX 2576).